Consider the following 299-residue polypeptide: Acetyl-coenzyme A carboxylase carboxyl transferase subunit beta (299 aa).

Positions 25–294 (VWTKCTSCEQ…PFVEPELIQE (270 aa)) constitute a CoA carboxyltransferase N-terminal domain. Residues C29, C32, C48, and C51 each coordinate Zn(2+). The C4-type zinc finger occupies 29 to 51 (CTSCEQVLYRDELKRHLEVCPKC).

The protein belongs to the AccD/PCCB family. Acetyl-CoA carboxylase is a heterohexamer composed of biotin carboxyl carrier protein (AccB), biotin carboxylase (AccC) and two subunits each of ACCase subunit alpha (AccA) and ACCase subunit beta (AccD). Zn(2+) is required as a cofactor.

The protein localises to the cytoplasm. The enzyme catalyses N(6)-carboxybiotinyl-L-lysyl-[protein] + acetyl-CoA = N(6)-biotinyl-L-lysyl-[protein] + malonyl-CoA. It participates in lipid metabolism; malonyl-CoA biosynthesis; malonyl-CoA from acetyl-CoA: step 1/1. In terms of biological role, component of the acetyl coenzyme A carboxylase (ACC) complex. Biotin carboxylase (BC) catalyzes the carboxylation of biotin on its carrier protein (BCCP) and then the CO(2) group is transferred by the transcarboxylase to acetyl-CoA to form malonyl-CoA. The protein is Acetyl-coenzyme A carboxylase carboxyl transferase subunit beta of Histophilus somni (strain 129Pt) (Haemophilus somnus).